A 255-amino-acid chain; its full sequence is Probable transcriptional regulatory protein CMS0715 (255 aa).

It belongs to the TACO1 family.

The protein resides in the cytoplasm. In Clavibacter sepedonicus (Clavibacter michiganensis subsp. sepedonicus), this protein is Probable transcriptional regulatory protein CMS0715.